The following is a 310-amino-acid chain: tRNA uridine(34) hydroxylase (310 aa).

One can recognise a Rhodanese domain in the interval 134–232; sequence DDPDTLLIDT…YFEEVSQTES (99 aa). Cys192 (cysteine persulfide intermediate) is an active-site residue.

Belongs to the TrhO family.

It carries out the reaction uridine(34) in tRNA + AH2 + O2 = 5-hydroxyuridine(34) in tRNA + A + H2O. In terms of biological role, catalyzes oxygen-dependent 5-hydroxyuridine (ho5U) modification at position 34 in tRNAs. In Prochlorococcus marinus (strain MIT 9313), this protein is tRNA uridine(34) hydroxylase.